Reading from the N-terminus, the 595-residue chain is Aspartate--tRNA(Asp/Asn) ligase (595 aa).

L-aspartate is bound at residue E175. An aspartate region spans residues Q199–K202. R221 and H454 together coordinate L-aspartate. R221–E223 serves as a coordination point for ATP. E488 provides a ligand contact to ATP. R495 contacts L-aspartate. ATP is bound at residue G540–R543.

It belongs to the class-II aminoacyl-tRNA synthetase family. Type 1 subfamily. Homodimer.

The protein localises to the cytoplasm. It carries out the reaction tRNA(Asx) + L-aspartate + ATP = L-aspartyl-tRNA(Asx) + AMP + diphosphate. Aspartyl-tRNA synthetase with relaxed tRNA specificity since it is able to aspartylate not only its cognate tRNA(Asp) but also tRNA(Asn). Reaction proceeds in two steps: L-aspartate is first activated by ATP to form Asp-AMP and then transferred to the acceptor end of tRNA(Asp/Asn). In Agrobacterium fabrum (strain C58 / ATCC 33970) (Agrobacterium tumefaciens (strain C58)), this protein is Aspartate--tRNA(Asp/Asn) ligase.